The primary structure comprises 298 residues: Acetylglutamate kinase (298 aa).

Substrate contacts are provided by residues G68–G69, R90, and N195.

The protein belongs to the acetylglutamate kinase family. ArgB subfamily.

Its subcellular location is the cytoplasm. It catalyses the reaction N-acetyl-L-glutamate + ATP = N-acetyl-L-glutamyl 5-phosphate + ADP. The protein operates within amino-acid biosynthesis; L-arginine biosynthesis; N(2)-acetyl-L-ornithine from L-glutamate: step 2/4. Catalyzes the ATP-dependent phosphorylation of N-acetyl-L-glutamate. The sequence is that of Acetylglutamate kinase from Hydrogenovibrio crunogenus (strain DSM 25203 / XCL-2) (Thiomicrospira crunogena).